A 529-amino-acid polypeptide reads, in one-letter code: Bifunctional purine biosynthesis protein PurH (529 aa).

An MGS-like domain is found at 1 to 148; the sequence is MQQRRPVRRA…KNHKDVAIVV (148 aa).

This sequence belongs to the PurH family.

It catalyses the reaction (6R)-10-formyltetrahydrofolate + 5-amino-1-(5-phospho-beta-D-ribosyl)imidazole-4-carboxamide = 5-formamido-1-(5-phospho-D-ribosyl)imidazole-4-carboxamide + (6S)-5,6,7,8-tetrahydrofolate. It carries out the reaction IMP + H2O = 5-formamido-1-(5-phospho-D-ribosyl)imidazole-4-carboxamide. Its pathway is purine metabolism; IMP biosynthesis via de novo pathway; 5-formamido-1-(5-phospho-D-ribosyl)imidazole-4-carboxamide from 5-amino-1-(5-phospho-D-ribosyl)imidazole-4-carboxamide (10-formyl THF route): step 1/1. The protein operates within purine metabolism; IMP biosynthesis via de novo pathway; IMP from 5-formamido-1-(5-phospho-D-ribosyl)imidazole-4-carboxamide: step 1/1. This chain is Bifunctional purine biosynthesis protein PurH, found in Salmonella paratyphi C (strain RKS4594).